Reading from the N-terminus, the 68-residue chain is UPF0337 protein RB10934 (68 aa).

It belongs to the UPF0337 (CsbD) family.

This Rhodopirellula baltica (strain DSM 10527 / NCIMB 13988 / SH1) protein is UPF0337 protein RB10934.